The following is a 289-amino-acid chain: Inorganic pyrophosphatase (289 aa).

Ser2 is subject to N-acetylserine. Lys57 carries the post-translational modification N6-acetyllysine. Asp116, Asp121, and Asp153 together coordinate Mg(2+). A Phosphoserine modification is found at Ser250.

This sequence belongs to the PPase family. In terms of assembly, homodimer. Requires Mg(2+) as cofactor. The N-terminus is blocked. As to expression, highest levels are found in retinal rod outer segments.

Its subcellular location is the cytoplasm. It catalyses the reaction diphosphate + H2O = 2 phosphate + H(+). This Bos taurus (Bovine) protein is Inorganic pyrophosphatase (PPA1).